A 533-amino-acid chain; its full sequence is Peptide chain release factor 3 (533 aa).

The tr-type G domain occupies 9–284; it reads ARRRTFAIIS…ALCELSPPPL (276 aa). GTP is bound by residues 18-25, 95-99, and 149-152; these read SHPDAGKT, DTPGH, and NKLD.

Belongs to the TRAFAC class translation factor GTPase superfamily. Classic translation factor GTPase family. PrfC subfamily.

The protein localises to the cytoplasm. Functionally, increases the formation of ribosomal termination complexes and stimulates activities of RF-1 and RF-2. It binds guanine nucleotides and has strong preference for UGA stop codons. It may interact directly with the ribosome. The stimulation of RF-1 and RF-2 is significantly reduced by GTP and GDP, but not by GMP. In Cupriavidus necator (strain ATCC 17699 / DSM 428 / KCTC 22496 / NCIMB 10442 / H16 / Stanier 337) (Ralstonia eutropha), this protein is Peptide chain release factor 3.